The primary structure comprises 241 residues: ATP synthase subunit a (241 aa).

Transmembrane regions (helical) follow at residues leucine 21 to cysteine 41, valine 84 to isoleucine 104, aspartate 116 to isoleucine 136, isoleucine 183 to glycine 203, and leucine 207 to methionine 227.

Belongs to the ATPase A chain family. In terms of assembly, F-type ATPases have 2 components, CF(1) - the catalytic core - and CF(0) - the membrane proton channel. CF(1) has five subunits: alpha(3), beta(3), gamma(1), delta(1), epsilon(1). CF(0) has three main subunits: a(1), b(2) and c(9-12). The alpha and beta chains form an alternating ring which encloses part of the gamma chain. CF(1) is attached to CF(0) by a central stalk formed by the gamma and epsilon chains, while a peripheral stalk is formed by the delta and b chains.

The protein localises to the cell membrane. In terms of biological role, key component of the proton channel; it plays a direct role in the translocation of protons across the membrane. The protein is ATP synthase subunit a of Staphylococcus carnosus (strain TM300).